Reading from the N-terminus, the 287-residue chain is 4-hydroxybenzoate octaprenyltransferase (287 aa).

Helical transmembrane passes span 23 to 40 (IGSLLLLWPTLWALWLAG), 99 to 119 (LFVVLVLLAFGLVLTLNTMTI), 141 to 161 (LPQFVLGAAFGWSIPMAYAAV), 163 to 183 (ESLPATCWMMFLAYICWTVAY), 213 to 233 (LIIGLLQFSMLALLLILGTMT), 235 to 255 (LGMPYYISLLVAGGMFIYQQI), and 266 to 286 (FKAFHNNKYAGMAIFIGVLFG).

It belongs to the UbiA prenyltransferase family. It depends on Mg(2+) as a cofactor.

Its subcellular location is the cell inner membrane. The enzyme catalyses all-trans-octaprenyl diphosphate + 4-hydroxybenzoate = 4-hydroxy-3-(all-trans-octaprenyl)benzoate + diphosphate. It functions in the pathway cofactor biosynthesis; ubiquinone biosynthesis. Catalyzes the prenylation of para-hydroxybenzoate (PHB) with an all-trans polyprenyl group. Mediates the second step in the final reaction sequence of ubiquinone-8 (UQ-8) biosynthesis, which is the condensation of the polyisoprenoid side chain with PHB, generating the first membrane-bound Q intermediate 3-octaprenyl-4-hydroxybenzoate. The sequence is that of 4-hydroxybenzoate octaprenyltransferase from Pectobacterium carotovorum subsp. carotovorum (strain PC1).